Reading from the N-terminus, the 422-residue chain is 3-phosphoshikimate 1-carboxyvinyltransferase (422 aa).

Lysine 21, serine 22, and arginine 26 together coordinate 3-phosphoshikimate. Position 21 (lysine 21) interacts with phosphoenolpyruvate. Residues glycine 93 and arginine 121 each coordinate phosphoenolpyruvate. The 3-phosphoshikimate site is built by serine 166, serine 167, glutamine 168, serine 194, aspartate 310, and lysine 337. Residue glutamine 168 coordinates phosphoenolpyruvate. The Proton acceptor role is filled by aspartate 310. Residues arginine 341, arginine 382, and lysine 407 each contribute to the phosphoenolpyruvate site.

Belongs to the EPSP synthase family. In terms of assembly, monomer.

The protein resides in the cytoplasm. The enzyme catalyses 3-phosphoshikimate + phosphoenolpyruvate = 5-O-(1-carboxyvinyl)-3-phosphoshikimate + phosphate. It participates in metabolic intermediate biosynthesis; chorismate biosynthesis. Catalyzes the transfer of the enolpyruvyl moiety of phosphoenolpyruvate (PEP) to the 5-hydroxyl of shikimate-3-phosphate (S3P) to produce enolpyruvyl shikimate-3-phosphate and inorganic phosphate. This chain is 3-phosphoshikimate 1-carboxyvinyltransferase, found in Methanoculleus marisnigri (strain ATCC 35101 / DSM 1498 / JR1).